The following is a 648-amino-acid chain: Bifunctional protein TilS/HprT (648 aa).

Position 29–34 (29–34) interacts with ATP; the sequence is SGGPDS. Aspartate 627 is a Mg(2+) binding site.

The protein in the N-terminal section; belongs to the tRNA(Ile)-lysidine synthase family. In the C-terminal section; belongs to the purine/pyrimidine phosphoribosyltransferase family. The cofactor is Mg(2+).

It is found in the cytoplasm. The enzyme catalyses IMP + diphosphate = hypoxanthine + 5-phospho-alpha-D-ribose 1-diphosphate. The catalysed reaction is GMP + diphosphate = guanine + 5-phospho-alpha-D-ribose 1-diphosphate. It catalyses the reaction cytidine(34) in tRNA(Ile2) + L-lysine + ATP = lysidine(34) in tRNA(Ile2) + AMP + diphosphate + H(+). Its function is as follows. Ligates lysine onto the cytidine present at position 34 of the AUA codon-specific tRNA(Ile) that contains the anticodon CAU, in an ATP-dependent manner. Cytidine is converted to lysidine, thus changing the amino acid specificity of the tRNA from methionine to isoleucine. This is Bifunctional protein TilS/HprT (tilS/hprT) from Listeria innocua serovar 6a (strain ATCC BAA-680 / CLIP 11262).